We begin with the raw amino-acid sequence, 148 residues long: Deoxyuridine 5'-triphosphate nucleotidohydrolase (148 aa).

7 residues coordinate dUMP: Ser69, Gly82, Asp85, Tyr88, Arg137, Phe142, and Gly143.

The protein belongs to the dUTPase family. As to quaternary structure, homotrimer. The cofactor is Mg(2+).

It carries out the reaction dUTP + H2O = dUMP + diphosphate + H(+). It functions in the pathway pyrimidine metabolism; dUMP biosynthesis; dUMP from dCTP (dUTP route): step 2/2. In terms of biological role, involved in nucleotide metabolism via production of dUMP, the immediate precursor of thymidine nucleotides, and decreases the intracellular concentration of dUTP so that uracil cannot be incorporated into DNA. In Kluyveromyces lactis (strain ATCC 8585 / CBS 2359 / DSM 70799 / NBRC 1267 / NRRL Y-1140 / WM37) (Yeast), this protein is Deoxyuridine 5'-triphosphate nucleotidohydrolase (DUT1).